Consider the following 461-residue polypeptide: tRNA modification GTPase MnmE (461 aa).

The (6S)-5-formyl-5,6,7,8-tetrahydrofolate site is built by arginine 23, glutamate 88, and arginine 127. The TrmE-type G domain maps to 223–382; sequence GLNTVIVGKP…VEEALVEIVY (160 aa). Asparagine 233 provides a ligand contact to K(+). GTP contacts are provided by residues 233-238, 252-258, and 277-280; these read NVGKSS, TEVPGTT, and DTAG. Residue serine 237 coordinates Mg(2+). Residues threonine 252, valine 254, and threonine 257 each contribute to the K(+) site. A Mg(2+)-binding site is contributed by threonine 258. A (6S)-5-formyl-5,6,7,8-tetrahydrofolate-binding site is contributed by lysine 461.

This sequence belongs to the TRAFAC class TrmE-Era-EngA-EngB-Septin-like GTPase superfamily. TrmE GTPase family. As to quaternary structure, homodimer. Heterotetramer of two MnmE and two MnmG subunits. The cofactor is K(+).

The protein localises to the cytoplasm. Functionally, exhibits a very high intrinsic GTPase hydrolysis rate. Involved in the addition of a carboxymethylaminomethyl (cmnm) group at the wobble position (U34) of certain tRNAs, forming tRNA-cmnm(5)s(2)U34. This chain is tRNA modification GTPase MnmE, found in Alkaliphilus metalliredigens (strain QYMF).